The following is a 599-amino-acid chain: Sulfite reductase [NADPH] flavoprotein alpha-component (599 aa).

The Flavodoxin-like domain maps to 64–202 (ITIISASQTG…AASEWRARVV (139 aa)). Residues 70 to 75 (SQTGNA), 117 to 120 (STQG), and 153 to 162 (LGDSSYEFFC) each bind FMN. One can recognise an FAD-binding FR-type domain in the interval 234 to 448 (DAPLAASLSV…IEHNDNFRLP (215 aa)). Residues T322, A356, 386 to 389 (RLYS), 404 to 406 (TVG), Y410, and 419 to 422 (GGAS) contribute to the FAD site. Residues 519–520 (SR), 525–529 (KIYVQ), and D561 each bind NADP(+). Y599 contributes to the FAD binding site.

The protein belongs to the NADPH-dependent sulphite reductase flavoprotein subunit CysJ family. In the N-terminal section; belongs to the flavodoxin family. It in the C-terminal section; belongs to the flavoprotein pyridine nucleotide cytochrome reductase family. As to quaternary structure, alpha(8)-beta(8). The alpha component is a flavoprotein, the beta component is a hemoprotein. Requires FAD as cofactor. FMN serves as cofactor.

It carries out the reaction hydrogen sulfide + 3 NADP(+) + 3 H2O = sulfite + 3 NADPH + 4 H(+). It participates in sulfur metabolism; hydrogen sulfide biosynthesis; hydrogen sulfide from sulfite (NADPH route): step 1/1. Component of the sulfite reductase complex that catalyzes the 6-electron reduction of sulfite to sulfide. This is one of several activities required for the biosynthesis of L-cysteine from sulfate. The flavoprotein component catalyzes the electron flow from NADPH -&gt; FAD -&gt; FMN to the hemoprotein component. The sequence is that of Sulfite reductase [NADPH] flavoprotein alpha-component from Escherichia coli O6:H1 (strain CFT073 / ATCC 700928 / UPEC).